Consider the following 291-residue polypeptide: MAKTPGPISLIEPLSGNSALLVKINAVYVVKRSRYQEIVVADTEDFGRALILDDYIQSSYYDEVYYHESLVHPAMSTHPSPADVLILGGGEGATLREVLKHRTVKRAVMVDIDGDVVEVARRYLPQMHQGAFDDPRAQVVIEDGFVYVERALAAGDKFDVVIMDLTDPYSSDIAKQLYAPGFFKKVRGLLREDGLVVTQAGNSFFFPEAYDMVLHGVRSSFPTVAEYSVWIPSFGYAVNYILGSLKYNPTALTPEEVDRRLRERGVQTHFYSGRTHLGLMSLPIHRKIRRV.

One can recognise a PABS domain in the interval 5–245 (PGPISLIEPL…YAVNYILGSL (241 aa)). S-methyl-5'-thioadenosine is bound at residue Q36. 2 residues coordinate spermidine: H67 and E91. Residues D111 and 143 to 144 (DG) each bind S-methyl-5'-thioadenosine. D164 acts as the Proton acceptor in catalysis.

The protein belongs to the spermidine/spermine synthase family. As to quaternary structure, homodimer or homotetramer.

The protein localises to the cytoplasm. It carries out the reaction S-adenosyl 3-(methylsulfanyl)propylamine + putrescine = S-methyl-5'-thioadenosine + spermidine + H(+). It participates in amine and polyamine biosynthesis; spermidine biosynthesis; spermidine from putrescine: step 1/1. Catalyzes the irreversible transfer of a propylamine group from the amino donor S-adenosylmethioninamine (decarboxy-AdoMet) to putrescine (1,4-diaminobutane) to yield spermidine. The chain is Polyamine aminopropyltransferase from Pyrobaculum neutrophilum (strain DSM 2338 / JCM 9278 / NBRC 100436 / V24Sta) (Thermoproteus neutrophilus).